Consider the following 231-residue polypeptide: NADH-ubiquinone oxidoreductase chain 4 (231 aa).

A run of 6 helical transmembrane segments spans residues 1–21 (PIAGSMVLAAILLKLGGYGII), 34–54 (MFLPFVVLALWGAILANLTCL), 61–80 (SLIAYSSVSHMGLVVAAIII), 85–107 (GLAGAMTLMIAHGFTSSALFCLA), 128–148 (ILPMATTWWLLTNLMNIAIPP), and 169–189 (TIILLGLSMLITASYSLHMFL).

This sequence belongs to the complex I subunit 4 family.

The protein localises to the mitochondrion membrane. It carries out the reaction a ubiquinone + NADH + 5 H(+)(in) = a ubiquinol + NAD(+) + 4 H(+)(out). Core subunit of the mitochondrial membrane respiratory chain NADH dehydrogenase (Complex I) that is believed to belong to the minimal assembly required for catalysis. Complex I functions in the transfer of electrons from NADH to the respiratory chain. The immediate electron acceptor for the enzyme is believed to be ubiquinone. The sequence is that of NADH-ubiquinone oxidoreductase chain 4 (MT-ND4) from Gloydius blomhoffii (Mamushi).